Here is a 238-residue protein sequence, read N- to C-terminus: Uridylate kinase (238 aa).

Residue 10 to 13 (KFSG) participates in ATP binding. Positions 18–23 (GDSGFG) are involved in allosteric activation by GTP. Residue Gly52 participates in UMP binding. Residues Gly53 and Arg57 each contribute to the ATP site. UMP contacts are provided by residues Asp73 and 134 to 141 (TGNPFFTT). Residues Thr161, Tyr167, and Asp170 each coordinate ATP.

The protein belongs to the UMP kinase family. In terms of assembly, homohexamer.

It is found in the cytoplasm. It catalyses the reaction UMP + ATP = UDP + ADP. It participates in pyrimidine metabolism; CTP biosynthesis via de novo pathway; UDP from UMP (UMPK route): step 1/1. Allosterically activated by GTP. Inhibited by UTP. In terms of biological role, catalyzes the reversible phosphorylation of UMP to UDP. The polypeptide is Uridylate kinase (Campylobacter curvus (strain 525.92)).